The chain runs to 209 residues: PRA1 family protein A1 (209 aa).

4 helical membrane-spanning segments follow: residues Leu51–Arg73, Ile77–Ser99, Val144–Leu164, and Val166–Pro186.

This sequence belongs to the PRA1 family.

The protein resides in the endoplasmic reticulum membrane. Its function is as follows. May be involved in both secretory and endocytic intracellular trafficking in the endosomal/prevacuolar compartments. This is PRA1 family protein A1 (PRA1A1) from Arabidopsis thaliana (Mouse-ear cress).